We begin with the raw amino-acid sequence, 1032 residues long: Caspase recruitment domain-containing protein 10 (1032 aa).

Disordered regions lie at residues 1-23 (MPGR…SEAE), 253-276 (RARG…EPDN), and 481-553 (EFPS…MSDI). Phosphoserine is present on serine 18. The CARD domain maps to 23-115 (EEDALWERIE…EHFTLLTGQE (93 aa)). The stretch at 138 to 456 (TEVRRLREAR…LEVQLQRAQG (319 aa)) forms a coiled coil. Basic and acidic residues-rich tracts occupy residues 261–276 (AEEK…EPDN) and 504–517 (HNSE…KEIN).

CARD10 and BCL10 bind to each other by CARD-CARD interaction. They both participate in a complex with MALT1, where MALT1 binds to BCL10. Interacts with TMEM43; this interaction is essential for EGFR-mediated NF-kappa-B activation. Detected in adult heart, kidney and liver; lower levels in intestine, placenta, muscle and lung. Also found in fetal lung, liver and kidney.

The protein resides in the cytoplasm. Scaffold protein that plays an important role in mediating the activation of NF-kappa-B via BCL10 or EGFR. The sequence is that of Caspase recruitment domain-containing protein 10 (CARD10) from Homo sapiens (Human).